The following is a 474-amino-acid chain: Aspartyl protease family protein At5g10770 (474 aa).

Positions 1 to 25 (MSINRNLLNIIIILCICLNLGCNDG) are cleaved as a signal peptide. The region spanning 132–469 (YIVTVGLGTP…DGAGGRVGFA (338 aa)) is the Peptidase A1 domain. Catalysis depends on residues D150 and D352. C391 and C432 form a disulfide bridge. N443 carries the GPI-anchor amidated asparagine lipid modification. Residues 444–474 (AAIFGNVQQQTLEVVYDGAGGRVGFAPNGCS) constitute a propeptide, removed in mature form.

The protein belongs to the peptidase A1 family.

It is found in the cell membrane. Its function is as follows. Probably not redundant with AED1 and not involved in restriction of salicylic acid (SA) or systemic acquired resistance (SAR) signaling. The protein is Aspartyl protease family protein At5g10770 of Arabidopsis thaliana (Mouse-ear cress).